The primary structure comprises 232 residues: MAAAKEKSDVLVNNEIHNCAELICSICRQLYKSGWVTGTGGGITIRTGDHIVIAPSGVQKEKLEVKDMFVMSLTTRDYLHTPKQNSKPSQCTPLFLSVYTSRDAYACIHTHSQEAVLLSNLFAQKTHFESSGFDVQRYIPRGSKKNGFYKFEDTIRIPFINNTAHESDLQSNLQKAINENPYTCAVIVRNHGIYAWGDSWEDAKMNTEAVEYLFHVFLRDYRIKHSKNCRFF.

Residue C91 coordinates substrate. Residues H109, H111, and H191 each contribute to the Zn(2+) site.

The protein belongs to the aldolase class II family. MtnB subfamily. The cofactor is Zn(2+).

The protein localises to the cytoplasm. The enzyme catalyses 5-(methylsulfanyl)-D-ribulose 1-phosphate = 5-methylsulfanyl-2,3-dioxopentyl phosphate + H2O. The protein operates within amino-acid biosynthesis; L-methionine biosynthesis via salvage pathway; L-methionine from S-methyl-5-thio-alpha-D-ribose 1-phosphate: step 2/6. Its function is as follows. Catalyzes the dehydration of methylthioribulose-1-phosphate (MTRu-1-P) into 2,3-diketo-5-methylthiopentyl-1-phosphate (DK-MTP-1-P). In Schizosaccharomyces japonicus (strain yFS275 / FY16936) (Fission yeast), this protein is Methylthioribulose-1-phosphate dehydratase.